A 544-amino-acid polypeptide reads, in one-letter code: Chaperonin GroEL 1 (544 aa).

Residues 30–33 (TLGP), Lys51, 87–91 (DGTTT), Gly415, 479–481 (NAA), and Asp495 contribute to the ATP site.

This sequence belongs to the chaperonin (HSP60) family. As to quaternary structure, forms a cylinder of 14 subunits composed of two heptameric rings stacked back-to-back. Interacts with the co-chaperonin GroES.

It localises to the cytoplasm. It catalyses the reaction ATP + H2O + a folded polypeptide = ADP + phosphate + an unfolded polypeptide.. In terms of biological role, together with its co-chaperonin GroES, plays an essential role in assisting protein folding. The GroEL-GroES system forms a nano-cage that allows encapsulation of the non-native substrate proteins and provides a physical environment optimized to promote and accelerate protein folding. The polypeptide is Chaperonin GroEL 1 (Vibrio cholerae serotype O1 (strain ATCC 39315 / El Tor Inaba N16961)).